Here is a 142-residue protein sequence, read N- to C-terminus: Immunoglobulin iota chain (142 aa).

A signal peptide spans 1 to 19; that stretch reads MAWTSVLLMLLAYLTGCGP. The interval 20–41 is framework-1; that stretch reads QPMVHQPPLASSSLGATIRLSC. Cys41 and Cys115 are joined by a disulfide. The interval 42–56 is complementarity-determining-1; that stretch reads TLSNDHNIGIYSIYW. The framework-2 stretch occupies residues 57–70; that stretch reads YQQRPGHPPRFLLR. The segment at 71-81 is complementarity-determining-2; sequence YFSHSDKHQGP. A framework-3 region spans residues 82–115; it reads DIPPRFSGSKDTTRNLGYLSISELQPEDEAVYYC.

The protein belongs to the immunoglobulin superfamily. In terms of assembly, interacts with IGLL1. Interacts with SYNV1/HRD1 (via N-terminus); this interaction leads to increased VPREB1A ubiquitination and degradation in pre-B cells, possibly through a lysosomal, not proteasomal, pathway. Only expressed by pre-B-cells.

The protein resides in the endoplasmic reticulum. Functionally, associates with the Ig-mu chain to form a molecular complex that is expressed on the surface of pre-B-cells. This complex presumably regulates Ig gene rearrangements in the early steps of B-cell differentiation. The sequence is that of Immunoglobulin iota chain from Mus musculus (Mouse).